The primary structure comprises 78 residues: Ferredoxin 7Fe (78 aa).

4Fe-4S ferredoxin-type domains lie at 2–29 (AYVI…IHEG) and 31–60 (DQYY…HEDF). 2 residues coordinate [3Fe-4S] cluster: C9 and C17. Positions 21, 40, 43, and 46 each coordinate [4Fe-4S] cluster. C50 contacts [3Fe-4S] cluster.

In terms of assembly, monomer. The cofactor is [4Fe-4S] cluster. It depends on [3Fe-4S] cluster as a cofactor.

The chain is Ferredoxin 7Fe (fdxA) from Hydrogenibacillus schlegelii (Bacillus schlegelii).